The sequence spans 490 residues: Angiopoietin-related protein 1 (490 aa).

Residues 1–22 (MKAFVWTLSVLLFLLGSGHCKG) form the signal peptide. A coiled-coil region spans residues 79 to 167 (ITRMDLENLK…LNVTTEMLKM (89 aa)). N-linked (GlcNAc...) asparagine glycans are attached at residues asparagine 159 and asparagine 187. The Fibrinogen C-terminal domain occupies 270–490 (FINEGPFKDC…AVQMMIKPID (221 aa)). Intrachain disulfides connect cysteine 279–cysteine 308 and cysteine 431–cysteine 444.

It localises to the secreted. The polypeptide is Angiopoietin-related protein 1 (Angptl1) (Mus musculus (Mouse)).